We begin with the raw amino-acid sequence, 260 residues long: MLSKRVIVCLDVRDGKTTKGIKFKGNVDIGDPVDMARVYYEAGCDELVFYDITASHEKRGIMIDVVRRVAETIFIPFSVGGGISSVEDMRDVLLAGAEKISVNSAAVKNPKIITQGAEAFGNQCVVLGMDVKKVEKSEKIPSGYEIVINGGRTYMGIDALWWAQEGERLGAGEICLNSIDADGTKEGYELELTALISENVNIPVIASGGGGIPQHLGDVLKEGKADAALIASMVHYGTYTIPEIKDHLKSQGISVRDQLQ.

Residues Asp11 and Asp130 contribute to the active site.

It belongs to the HisA/HisF family. Heterodimer of HisH and HisF.

The protein localises to the cytoplasm. It catalyses the reaction 5-[(5-phospho-1-deoxy-D-ribulos-1-ylimino)methylamino]-1-(5-phospho-beta-D-ribosyl)imidazole-4-carboxamide + L-glutamine = D-erythro-1-(imidazol-4-yl)glycerol 3-phosphate + 5-amino-1-(5-phospho-beta-D-ribosyl)imidazole-4-carboxamide + L-glutamate + H(+). The protein operates within amino-acid biosynthesis; L-histidine biosynthesis; L-histidine from 5-phospho-alpha-D-ribose 1-diphosphate: step 5/9. In terms of biological role, IGPS catalyzes the conversion of PRFAR and glutamine to IGP, AICAR and glutamate. The HisF subunit catalyzes the cyclization activity that produces IGP and AICAR from PRFAR using the ammonia provided by the HisH subunit. The chain is Imidazole glycerol phosphate synthase subunit HisF from Desulfatibacillum aliphaticivorans.